The following is a 472-amino-acid chain: Glycine--tRNA ligase (472 aa).

Substrate is bound by residues Arg109 and Glu174. ATP-binding positions include 206–208 (RNE), 216–221 (FRTREF), 293–294 (EL), and 337–340 (GLTR). Position 221 to 225 (221 to 225 (FEQME)) interacts with substrate. Position 333–337 (333–337 (EPAAG)) interacts with substrate.

The protein belongs to the class-II aminoacyl-tRNA synthetase family. Homodimer.

Its subcellular location is the cytoplasm. It catalyses the reaction tRNA(Gly) + glycine + ATP = glycyl-tRNA(Gly) + AMP + diphosphate. In terms of biological role, catalyzes the attachment of glycine to tRNA(Gly). This is Glycine--tRNA ligase from Cutibacterium acnes (strain DSM 16379 / KPA171202) (Propionibacterium acnes).